We begin with the raw amino-acid sequence, 66 residues long: Large ribosomal subunit protein bL35 (66 aa).

This sequence belongs to the bacterial ribosomal protein bL35 family.

This is Large ribosomal subunit protein bL35 from Brucella melitensis biotype 1 (strain ATCC 23456 / CCUG 17765 / NCTC 10094 / 16M).